A 421-amino-acid polypeptide reads, in one-letter code: Homoserine dehydrogenase (421 aa).

NAD(+) is bound by residues valine 15, alanine 34, and valine 44. Valine 15 is an NADP(+) binding site. Residue valine 15 participates in NADPH binding. The NADP(+) site is built by arginine 46 and lysine 103. Residues arginine 46 and lysine 103 each coordinate NADPH. Na(+)-binding residues include glutamate 125, valine 128, glycine 130, and isoleucine 132. Positions 183 and 186 each coordinate NADP(+). L-homoserine is bound by residues glutamate 186 and aspartate 197. The active-site Proton donor is lysine 201. Glycine 298 lines the NAD(+) pocket. Glycine 298 contributes to the NADP(+) binding site. Glycine 298 is an NADPH binding site. The region spanning 343–418 (YARLLVSDEK…SVLDTPKMIR (76 aa)) is the ACT domain.

Belongs to the homoserine dehydrogenase family. It depends on a metal cation as a cofactor.

It carries out the reaction L-homoserine + NADP(+) = L-aspartate 4-semialdehyde + NADPH + H(+). The enzyme catalyses L-homoserine + NAD(+) = L-aspartate 4-semialdehyde + NADH + H(+). It functions in the pathway amino-acid biosynthesis; L-methionine biosynthesis via de novo pathway; L-homoserine from L-aspartate: step 3/3. Its pathway is amino-acid biosynthesis; L-threonine biosynthesis; L-threonine from L-aspartate: step 3/5. In terms of biological role, catalyzes the conversion of L-aspartate-beta-semialdehyde (L-Asa) to L-homoserine (L-Hse), the third step in the biosynthesis of threonine and methionine from aspartate. In Helicobacter pylori (strain ATCC 700392 / 26695) (Campylobacter pylori), this protein is Homoserine dehydrogenase (hom).